A 414-amino-acid chain; its full sequence is Serine hydroxymethyltransferase (414 aa).

Residues L116 and G120–L122 each bind (6S)-5,6,7,8-tetrahydrofolate. K224 carries the post-translational modification N6-(pyridoxal phosphate)lysine. Residues E240 and S348–F350 each bind (6S)-5,6,7,8-tetrahydrofolate.

This sequence belongs to the SHMT family. In terms of assembly, homodimer. Pyridoxal 5'-phosphate is required as a cofactor.

The protein localises to the cytoplasm. It carries out the reaction (6R)-5,10-methylene-5,6,7,8-tetrahydrofolate + glycine + H2O = (6S)-5,6,7,8-tetrahydrofolate + L-serine. The protein operates within one-carbon metabolism; tetrahydrofolate interconversion. It participates in amino-acid biosynthesis; glycine biosynthesis; glycine from L-serine: step 1/1. Its function is as follows. Catalyzes the reversible interconversion of serine and glycine with tetrahydrofolate (THF) serving as the one-carbon carrier. This reaction serves as the major source of one-carbon groups required for the biosynthesis of purines, thymidylate, methionine, and other important biomolecules. Also exhibits THF-independent aldolase activity toward beta-hydroxyamino acids, producing glycine and aldehydes, via a retro-aldol mechanism. The protein is Serine hydroxymethyltransferase of Campylobacter fetus subsp. fetus (strain 82-40).